The following is a 688-amino-acid chain: Elongation factor G (688 aa).

One can recognise a tr-type G domain in the interval 8-282; sequence EKTRNIGIIA…AVVDYLPAPC (275 aa). Residues 17-24, 81-85, and 135-138 contribute to the GTP site; these read AHIDAGKT, DTPGH, and NKMD.

This sequence belongs to the TRAFAC class translation factor GTPase superfamily. Classic translation factor GTPase family. EF-G/EF-2 subfamily.

The protein resides in the cytoplasm. Functionally, catalyzes the GTP-dependent ribosomal translocation step during translation elongation. During this step, the ribosome changes from the pre-translocational (PRE) to the post-translocational (POST) state as the newly formed A-site-bound peptidyl-tRNA and P-site-bound deacylated tRNA move to the P and E sites, respectively. Catalyzes the coordinated movement of the two tRNA molecules, the mRNA and conformational changes in the ribosome. This Aster yellows witches'-broom phytoplasma (strain AYWB) protein is Elongation factor G.